The primary structure comprises 266 residues: Metallo-beta-lactamase domain-containing protein 1 (266 aa).

The tract at residues 48-71 is disordered; sequence LPQTRGPASSHRESPRGSGGAEAA. Positions 114, 116, 118, 119, 169, 192, and 231 each coordinate Zn(2+). A disordered region spans residues 229–266; sequence PGHGPPFRVLREASQPETEGGGNSQQEPVVGDEEPALH.

Belongs to the metallo-beta-lactamase superfamily. Glyoxalase II family. In terms of assembly, homodimer. It depends on Zn(2+) as a cofactor.

It is found in the cytoplasm. The protein localises to the cytosol. It localises to the nucleus. The catalysed reaction is a ribonucleotidyl-ribonucleotide-RNA + H2O = a 3'-end ribonucleotide-RNA + a 5'-end 5'-phospho-ribonucleoside-RNA + H(+). Functionally, endoribonuclease that catalyzes the hydrolysis of histone-coding pre-mRNA 3'-end. Involved in histone pre-mRNA processing during the S-phase of the cell cycle, which is required for entering/progressing through S-phase. Cleaves histone pre-mRNA at a major and a minor cleavage site after the 5'-ACCCA-3' and the 5'-ACCCACA-3' sequence, respectively, and located downstream of the stem-loop. May require the presence of the HDE element located at the histone pre-RNA 3'-end to avoid non-specific cleavage. This is Metallo-beta-lactamase domain-containing protein 1 from Homo sapiens (Human).